Here is a 582-residue protein sequence, read N- to C-terminus: Protein NRT1/ PTR FAMILY 5.2 (582 aa).

Transmembrane regions (helical) follow at residues 77–97 (WVGTSWLTPILGAYVGDALLG), 100–120 (ITFVISCAIYFSGMMVLTLSV), 141–161 (ASVLQLAVFFGALYTLAIGTG), 189–209 (FFNWWMFSIFFGTLFANTVLV), 217–237 (WTLGYGLPTLGLAISITIFLL), 334–354 (PVLFITFVPSMMLAQINTLFV), 370–390 (IPPASLSGFVTLSMLISIVLY), 408–428 (ITLLQRMGIGLIFHILIMIVA), 452–472 (LPLTIFALLPQFVLMGMADSF), 493–515 (GTSYSTTSLAIGNFMSSFLLSTV), and 538–558 (YYYLFFAVLNLVNFVLFLVVV).

The protein belongs to the major facilitator superfamily. Proton-dependent oligopeptide transporter (POT/PTR) (TC 2.A.17) family. In terms of tissue distribution, expressed in roots. Detected in shoots, leaves and flowers.

The protein resides in the membrane. In terms of biological role, peptide transporter involved in stress tolerance in seeds during germination and in defense against virulent bacterial pathogens. The sequence is that of Protein NRT1/ PTR FAMILY 5.2 (NPF5.2) from Arabidopsis thaliana (Mouse-ear cress).